The chain runs to 197 residues: Fucoxanthin-chlorophyll a-c binding protein D, chloroplastic (197 aa).

A chloroplast-targeting transit peptide spans 1–31; that stretch reads MKTAVIASLIAGAAAFAPAKNAARTSVATNM. The next 3 membrane-spanning stretches (helical) occupy residues 73 to 94, 114 to 133, and 174 to 196; these read ISMLAVVGYLVQEAGVRLPGTI, PAGGLVQLLFFIGVLESSVM, and GRAAQMGILALMVHEQLGVSLLP.

Belongs to the fucoxanthin chlorophyll protein family. In terms of assembly, the LHC complex of chromophytic algae is composed of fucoxanthin, chlorophyll A and C bound non-covalently by fucoxanthin chlorophyll proteins (FCPs). The ratio of the pigments in LHC; fucoxanthin: chlorophyll C: chlorophyll A; (0.6-1): (0.1-0.3): (1).

It is found in the plastid. Its subcellular location is the chloroplast thylakoid membrane. In terms of biological role, the light-harvesting complex (LHC) functions as a light receptor, it captures and delivers excitation energy to photosystems with which it is closely associated. Energy is transferred from the carotenoid and chlorophyll C (or B) to chlorophyll A and the photosynthetic reaction centers where it is used to synthesize ATP and reducing power. The sequence is that of Fucoxanthin-chlorophyll a-c binding protein D, chloroplastic (FCPD) from Phaeodactylum tricornutum (Diatom).